Here is a 283-residue protein sequence, read N- to C-terminus: 4-diphosphocytidyl-2-C-methyl-D-erythritol kinase (283 aa).

Residue lysine 10 is part of the active site. ATP is bound at residue 99 to 109 (PMGGGLGGGSS). Residue aspartate 141 is part of the active site.

This sequence belongs to the GHMP kinase family. IspE subfamily. Homodimer.

The catalysed reaction is 4-CDP-2-C-methyl-D-erythritol + ATP = 4-CDP-2-C-methyl-D-erythritol 2-phosphate + ADP + H(+). It functions in the pathway isoprenoid biosynthesis; isopentenyl diphosphate biosynthesis via DXP pathway; isopentenyl diphosphate from 1-deoxy-D-xylulose 5-phosphate: step 3/6. Catalyzes the phosphorylation of the position 2 hydroxy group of 4-diphosphocytidyl-2C-methyl-D-erythritol. The protein is 4-diphosphocytidyl-2-C-methyl-D-erythritol kinase of Salmonella typhi.